A 31-amino-acid polypeptide reads, in one-letter code: Conotoxin (31 aa).

It belongs to the conotoxin S superfamily. Contains 5 disulfide bonds. Expressed by the venom duct.

The protein localises to the secreted. This chain is Conotoxin, found in Conus striatus (Striated cone).